Here is a 210-residue protein sequence, read N- to C-terminus: WASH complex subunit 3 (210 aa).

Residues 49–73 (EEKLASISLRIQQIETTLSILEAKL) are a coiled coil. Residues 173–210 (LDPNLLDTPDAPVPDAVKKNTLDQDDDSDDGSESSFSD) are disordered. A compositionally biased stretch (acidic residues) spans 195-204 (DQDDDSDDGS).

Belongs to the CCDC53 family. As to quaternary structure, component of the WASH complex.

The protein is WASH complex subunit 3 of Salmo salar (Atlantic salmon).